The following is a 563-amino-acid chain: Minor fimbrium subunit Mfa1 (563 aa).

The signal sequence occupies residues 1–19; that stretch reads MKLNKMFLVGALLSLGFAS. The N-palmitoyl cysteine moiety is linked to residue Cys20. The S-diacylglycerol cysteine moiety is linked to residue Cys20. Positions 20 to 49 are excised as a propeptide; sequence CSKEGNGPDPDNAAKSYMSMTLSMPMGSAR. Residues 504–543 form a disordered region; sequence LVPDPDPSNPENPNNPDPNPDEPGTPVPTDPENPLPDQDT. A compositionally biased stretch (pro residues) spans 505–537; sequence VPDPDPSNPENPNNPDPNPDEPGTPVPTDPENP.

Belongs to the bacteroidetes fimbrillin superfamily. As to quaternary structure, structural component of the fimbrial stalk. Minor fimbriae are composed of a structural subunit, most often Mfa1, and the accessory subunits Mfa3, Mfa4 and Mfa5. Mfa1 interacts with Mfa2; this anchors the fimbrium in the membrane. Fimbrium assembly occurs by linear, head-to-tail oligomerization of fimbrial subunits. This is mediated via insertion of a C-terminal beta-strand from one subunit into a groove in the N-terminal domain of the following subunit. Interacts with S.gordonii ssp5.

The protein resides in the fimbrium. The protein localises to the cell outer membrane. Functionally, structural subunit of the minor fimbriae. These filamentous pili are attached to the cell surface; they mediate biofilm formation, adhesion onto host cells and onto other bacteria that are part of the oral microbiome. They play an important role in invasion of periodontal tissues and are recognized as major virulence factors. Mfa1 orthologs from different strains have highly divergent sequences, and this correlates with pathogenicity. This chain is Minor fimbrium subunit Mfa1, found in Porphyromonas gingivalis (strain ATCC 33277 / DSM 20709 / CIP 103683 / JCM 12257 / NCTC 11834 / 2561).